We begin with the raw amino-acid sequence, 257 residues long: MSILFYVIFLAYLRGIQGNNMDQRSLPEDSLNSLIIKLIQADILKNKLSKQMVDVKENYQSTLPKAEAPREPERGGPAKSAFQPVIAMDTELLRQQRRYNSPRVLLSDSTPLEPPPLYLMEDYVGSPVVANRTSRRKRYAEHKSHRGEYSVCDSESLWVTDKSSAIDIRGHQVTVLGEIKTGNSPVKQYFYETRCKEARPVKNGCRGIDDKHWNSQCKTSQTYVRALTSENNKLVGWRWIRIDTSCVCALSRKIGRT.

A signal peptide spans 1 to 18 (MSILFYVIFLAYLRGIQG). The propeptide occupies 19-138 (NNMDQRSLPE…VANRTSRRKR (120 aa)). The segment at 61–81 (STLPKAEAPREPERGGPAKSA) is disordered. The span at 67 to 76 (EAPREPERGG) shows a compositional bias: basic and acidic residues. Residue Asn-131 is glycosylated (N-linked (GlcNAc...) asparagine). 3 cysteine pairs are disulfide-bonded: Cys-152/Cys-217, Cys-195/Cys-246, and Cys-205/Cys-248.

The protein belongs to the NGF-beta family. Brain and peripheral tissues.

Its subcellular location is the secreted. Its function is as follows. Seems to promote the survival of visceral and proprioceptive sensory neurons. This is Neurotrophin-3 (NTF3) from Homo sapiens (Human).